The chain runs to 91 residues: MLLSELKPNHDYAKEGKYLILSLRKKKGVRKDKFIEIPITWFDYNFGEKVEWLIVREYQPSVNGKEKYTNCKLENIHAQVSVVNVKGERMK.

This is an uncharacterized protein from Bacillus anthracis.